A 227-amino-acid polypeptide reads, in one-letter code: 7-cyano-7-deazaguanine synthase (227 aa).

11 to 21 (VSGGMDSAALL) lines the ATP pocket. The Zn(2+) site is built by Cys-192, Cys-200, Cys-203, and Cys-206.

Belongs to the QueC family. It depends on Zn(2+) as a cofactor.

The enzyme catalyses 7-carboxy-7-deazaguanine + NH4(+) + ATP = 7-cyano-7-deazaguanine + ADP + phosphate + H2O + H(+). Its pathway is purine metabolism; 7-cyano-7-deazaguanine biosynthesis. In terms of biological role, catalyzes the ATP-dependent conversion of 7-carboxy-7-deazaguanine (CDG) to 7-cyano-7-deazaguanine (preQ(0)). The protein is 7-cyano-7-deazaguanine synthase of Persephonella marina (strain DSM 14350 / EX-H1).